Here is a 215-residue protein sequence, read N- to C-terminus: Cytochrome b-c1 complex subunit Rieske, mitochondrial (215 aa).

A mitochondrion-targeting transit peptide spans 1–22 (MLGIRSSVKTCFKPMSLTSKRL). Residues 23 to 30 (ISQSLLAS) constitute a propeptide, removed in mature form. Topologically, residues 31-50 (KSTYRTPNFDDVLKENNDAD) are mitochondrial matrix. A helical transmembrane segment spans residues 51–80 (KGRSYAYFMVGAMGLLSSAGAKSTVETFIS). The Mitochondrial intermembrane segment spans residues 81 to 215 (SMTATADVLA…EFDGDKVIVG (135 aa)). Residues 90–93 (AMAK) form a hinge region. The Rieske domain occupies 123 to 214 (PHEIQEANSV…YEFDGDKVIV (92 aa)). Residues cysteine 159, histidine 161, cysteine 178, and histidine 181 each contribute to the [2Fe-2S] cluster site. Cysteines 164 and 180 form a disulfide.

The protein belongs to the Rieske iron-sulfur protein family. Component of the ubiquinol-cytochrome c oxidoreductase (cytochrome b-c1 complex, complex III, CIII), a multisubunit enzyme composed of 10 subunits. The complex is composed of 3 respiratory subunits cytochrome b (COB), cytochrome c1 (CYT1) and Rieske protein (RIP1), 2 core protein subunits COR1 and QCR2, and 5 low-molecular weight protein subunits QCR6, QCR7, QCR8, QCR9 and QCR10. The complex exists as an obligatory dimer and forms supercomplexes (SCs) in the inner mitochondrial membrane with a monomer or a dimer of cytochrome c oxidase (complex IV, CIV), resulting in 2 different assemblies (supercomplexes III(2)IV and III(2)IV(2)). RIP1 interacts with QCR10 on the intermembrane space (IMS) side, and with QCR9. It depends on [2Fe-2S] cluster as a cofactor. Processed by both the mitochondrial processing peptidase (MPP) and the mitochondrial intermediate protease (MIP). Initially, MPP removes 22 amino acids from the newly imported precursor in the mitochondrial matrix. This proteolytic processing is then followed by a second proteolytic cleavage by MIP, which removes an octapeptide to generate mature-sized RIP1.

It is found in the mitochondrion inner membrane. The enzyme catalyses a quinol + 2 Fe(III)-[cytochrome c](out) = a quinone + 2 Fe(II)-[cytochrome c](out) + 2 H(+)(out). Functionally, component of the ubiquinol-cytochrome c oxidoreductase, a multisubunit transmembrane complex that is part of the mitochondrial electron transport chain which drives oxidative phosphorylation. The respiratory chain contains 3 multisubunit complexes succinate dehydrogenase (complex II, CII), ubiquinol-cytochrome c oxidoreductase (cytochrome b-c1 complex, complex III, CIII) and cytochrome c oxidase (complex IV, CIV), that cooperate to transfer electrons derived from NADH and succinate to molecular oxygen, creating an electrochemical gradient over the inner membrane that drives transmembrane transport and the ATP synthase. The cytochrome b-c1 complex catalyzes electron transfer from ubiquinol to cytochrome c, linking this redox reaction to translocation of protons across the mitochondrial inner membrane, with protons being carried across the membrane as hydrogens on the quinol. In the process called Q cycle, 2 protons are consumed from the matrix, 4 protons are released into the intermembrane space and 2 electrons are passed to cytochrome c. The Rieske protein is a catalytic core subunit containing a [2Fe-2S] iron-sulfur cluster. It cycles between 2 conformational states during catalysis to transfer electrons from the quinol bound in the Q(0) site in cytochrome b (COB) to cytochrome c1 (CYT1). In Saccharomyces cerevisiae (strain ATCC 204508 / S288c) (Baker's yeast), this protein is Cytochrome b-c1 complex subunit Rieske, mitochondrial (RIP1).